A 274-amino-acid polypeptide reads, in one-letter code: Diaminopimelate epimerase (274 aa).

Substrate is bound by residues Asn11, Gln44, and Asn64. Cys73 acts as the Proton donor in catalysis. Substrate-binding positions include 74 to 75 (GN), Asn157, Asn190, and 208 to 209 (ER). Cys217 (proton acceptor) is an active-site residue. A substrate-binding site is contributed by 218–219 (GS).

This sequence belongs to the diaminopimelate epimerase family. Homodimer.

It is found in the cytoplasm. It catalyses the reaction (2S,6S)-2,6-diaminopimelate = meso-2,6-diaminopimelate. Its pathway is amino-acid biosynthesis; L-lysine biosynthesis via DAP pathway; DL-2,6-diaminopimelate from LL-2,6-diaminopimelate: step 1/1. Catalyzes the stereoinversion of LL-2,6-diaminopimelate (L,L-DAP) to meso-diaminopimelate (meso-DAP), a precursor of L-lysine and an essential component of the bacterial peptidoglycan. The chain is Diaminopimelate epimerase from Shigella boydii serotype 18 (strain CDC 3083-94 / BS512).